A 380-amino-acid polypeptide reads, in one-letter code: 3-dehydroquinate synthase (380 aa).

NAD(+) contacts are provided by residues 118-122 (GVIGD), 142-143 (TS), K155, and K164. Zn(2+) is bound by residues E197, H259, and H278.

The protein belongs to the sugar phosphate cyclases superfamily. Dehydroquinate synthase family. Co(2+) is required as a cofactor. Requires Zn(2+) as cofactor. The cofactor is NAD(+).

Its subcellular location is the cytoplasm. The catalysed reaction is 7-phospho-2-dehydro-3-deoxy-D-arabino-heptonate = 3-dehydroquinate + phosphate. Its pathway is metabolic intermediate biosynthesis; chorismate biosynthesis; chorismate from D-erythrose 4-phosphate and phosphoenolpyruvate: step 2/7. Its function is as follows. Catalyzes the conversion of 3-deoxy-D-arabino-heptulosonate 7-phosphate (DAHP) to dehydroquinate (DHQ). This chain is 3-dehydroquinate synthase, found in Sinorhizobium medicae (strain WSM419) (Ensifer medicae).